The chain runs to 252 residues: Imidazole glycerol phosphate synthase subunit HisF (252 aa).

Residues D11 and D130 contribute to the active site.

This sequence belongs to the HisA/HisF family. Heterodimer of HisH and HisF.

It localises to the cytoplasm. It catalyses the reaction 5-[(5-phospho-1-deoxy-D-ribulos-1-ylimino)methylamino]-1-(5-phospho-beta-D-ribosyl)imidazole-4-carboxamide + L-glutamine = D-erythro-1-(imidazol-4-yl)glycerol 3-phosphate + 5-amino-1-(5-phospho-beta-D-ribosyl)imidazole-4-carboxamide + L-glutamate + H(+). Its pathway is amino-acid biosynthesis; L-histidine biosynthesis; L-histidine from 5-phospho-alpha-D-ribose 1-diphosphate: step 5/9. In terms of biological role, IGPS catalyzes the conversion of PRFAR and glutamine to IGP, AICAR and glutamate. The HisF subunit catalyzes the cyclization activity that produces IGP and AICAR from PRFAR using the ammonia provided by the HisH subunit. In Streptococcus gordonii (strain Challis / ATCC 35105 / BCRC 15272 / CH1 / DL1 / V288), this protein is Imidazole glycerol phosphate synthase subunit HisF.